A 50-amino-acid polypeptide reads, in one-letter code: Large ribosomal subunit protein eL39 (50 aa).

Over residues 1–12 (MGKKSKAKKKRL) the composition is skewed to basic residues. A disordered region spans residues 1 to 21 (MGKKSKAKKKRLGKLEKQNSR).

This sequence belongs to the eukaryotic ribosomal protein eL39 family.

The polypeptide is Large ribosomal subunit protein eL39 (Haloquadratum walsbyi (strain DSM 16790 / HBSQ001)).